Here is a 393-residue protein sequence, read N- to C-terminus: CCA-adding enzyme (393 aa).

2 residues coordinate ATP: Gly-27 and Arg-30. 2 residues coordinate CTP: Gly-27 and Arg-30. Mg(2+) contacts are provided by Asp-40 and Asp-42. Arg-111, Asp-154, Arg-157, Arg-160, and Arg-163 together coordinate ATP. CTP is bound by residues Arg-111, Asp-154, Arg-157, Arg-160, and Arg-163.

The protein belongs to the tRNA nucleotidyltransferase/poly(A) polymerase family. Bacterial CCA-adding enzyme type 3 subfamily. In terms of assembly, homodimer. Requires Mg(2+) as cofactor.

The catalysed reaction is a tRNA precursor + 2 CTP + ATP = a tRNA with a 3' CCA end + 3 diphosphate. It catalyses the reaction a tRNA with a 3' CCA end + 2 CTP + ATP = a tRNA with a 3' CCACCA end + 3 diphosphate. Catalyzes the addition and repair of the essential 3'-terminal CCA sequence in tRNAs without using a nucleic acid template. Adds these three nucleotides in the order of C, C, and A to the tRNA nucleotide-73, using CTP and ATP as substrates and producing inorganic pyrophosphate. tRNA 3'-terminal CCA addition is required both for tRNA processing and repair. Also involved in tRNA surveillance by mediating tandem CCA addition to generate a CCACCA at the 3' terminus of unstable tRNAs. While stable tRNAs receive only 3'-terminal CCA, unstable tRNAs are marked with CCACCA and rapidly degraded. The sequence is that of CCA-adding enzyme from Listeria monocytogenes serotype 4b (strain CLIP80459).